The following is a 136-amino-acid chain: Large ribosomal subunit protein bL17 (136 aa).

The protein belongs to the bacterial ribosomal protein bL17 family. Part of the 50S ribosomal subunit. Contacts protein L32.

In Rickettsia peacockii (strain Rustic), this protein is Large ribosomal subunit protein bL17.